Consider the following 97-residue polypeptide: MRKILIFIVRIYQTLISPLFPPSCRYYPTCSNYMIDALKKHGPILGLIMGISRTLRCNPFVRGGVDPVPDNFTVFRNPHPERYEDEIIASKFHSNSK.

The protein belongs to the UPF0161 family.

It localises to the cell membrane. In terms of biological role, could be involved in insertion of integral membrane proteins into the membrane. The sequence is that of Putative membrane protein insertion efficiency factor from Lactobacillus helveticus (strain DPC 4571).